Here is a 150-residue protein sequence, read N- to C-terminus: Small ribosomal subunit protein eS19 (150 aa).

This sequence belongs to the eukaryotic ribosomal protein eS19 family. Part of the 30S ribosomal subunit.

May be involved in maturation of the 30S ribosomal subunit. This is Small ribosomal subunit protein eS19 from Thermococcus kodakarensis (strain ATCC BAA-918 / JCM 12380 / KOD1) (Pyrococcus kodakaraensis (strain KOD1)).